A 333-amino-acid chain; its full sequence is Fatty acid hydroxylase domain-containing protein 2 (333 aa).

6 helical membrane passes run phenylalanine 29–leucine 49, isoleucine 77–leucine 97, threonine 134–leucine 154, phenylalanine 168–tyrosine 188, valine 215–valine 235, and proline 237–isoleucine 257. Positions alanine 176 to threonine 299 constitute a Fatty acid hydroxylase domain.

It belongs to the sterol desaturase family. In terms of tissue distribution, down-regulated in primary acute myeloid leukemia (AML) patients.

The protein resides in the cytoplasm. It is found in the membrane. In terms of biological role, promotes megakaryocyte differentiation by enhancing ERK phosphorylation and up-regulating RUNX1 expression. This chain is Fatty acid hydroxylase domain-containing protein 2 (FAXDC2), found in Homo sapiens (Human).